The primary structure comprises 376 residues: 5-amino-6-(D-ribitylamino)uracil--L-tyrosine 4-hydroxyphenyl transferase 1 (376 aa).

A Radical SAM core domain is found at 50–284; the sequence is VTYVVNRNIN…AISRILLHGH (235 aa). Residues C64, C68, and C71 each coordinate [4Fe-4S] cluster.

It belongs to the radical SAM superfamily. CofH family. As to quaternary structure, consists of two subunits, CofG and CofH. It depends on [4Fe-4S] cluster as a cofactor.

It carries out the reaction 5-amino-6-(D-ribitylamino)uracil + L-tyrosine + S-adenosyl-L-methionine = 5-amino-5-(4-hydroxybenzyl)-6-(D-ribitylimino)-5,6-dihydrouracil + 2-iminoacetate + 5'-deoxyadenosine + L-methionine + H(+). It functions in the pathway cofactor biosynthesis; coenzyme F0 biosynthesis. Catalyzes the radical-mediated synthesis of 5-amino-5-(4-hydroxybenzyl)-6-(D-ribitylimino)-5,6-dihydrouracil from 5-amino-6-(D-ribitylamino)uracil and L-tyrosine. This is 5-amino-6-(D-ribitylamino)uracil--L-tyrosine 4-hydroxyphenyl transferase 1 from Methanosarcina barkeri (strain Fusaro / DSM 804).